An 80-amino-acid chain; its full sequence is Venom protein HGE029 (80 aa).

An N-terminal signal peptide occupies residues 1-22 (MNAKAFLAIFMIALLITDRAEA).

It belongs to the non-disulfide-bridged peptide (NDBP) superfamily. Long chain multifunctional peptide (group 2) family. Expressed by the venom gland.

The protein resides in the secreted. This chain is Venom protein HGE029, found in Hoffmannihadrurus gertschi (Scorpion).